Reading from the N-terminus, the 238-residue chain is MRIDNRELNQLRSISFERHYTKHAEGSVLVSFGDTKVLCTASVESGVPRWLKGKGKGWITAEYGMLPRATNTRNQREAARGKQSGRTQEIQRLIGRSLRAMIDLSKLGENTIYLDCDVLQADGGTRTASVTGAAIALIDALESIQKTKKLKADPLIGLVAAVSVGMKDGKAYLDLNYEEDASCDTDLNVVMTQKGEFIELQGTAEEKPFTRAQADDMLILAEKGIAELIAMQKTALGW.

Phosphate-binding positions include R86 and 124-126; that span reads GTR.

The protein belongs to the RNase PH family. Homohexameric ring arranged as a trimer of dimers.

It carries out the reaction tRNA(n+1) + phosphate = tRNA(n) + a ribonucleoside 5'-diphosphate. Its function is as follows. Phosphorolytic 3'-5' exoribonuclease that plays an important role in tRNA 3'-end maturation. Removes nucleotide residues following the 3'-CCA terminus of tRNAs; can also add nucleotides to the ends of RNA molecules by using nucleoside diphosphates as substrates, but this may not be physiologically important. Probably plays a role in initiation of 16S rRNA degradation (leading to ribosome degradation) during starvation. The chain is Ribonuclease PH from Psychrobacter cryohalolentis (strain ATCC BAA-1226 / DSM 17306 / VKM B-2378 / K5).